Here is a 967-residue protein sequence, read N- to C-terminus: RNA polymerase-associated protein RapA (967 aa).

The 175-residue stretch at 163-337 folds into the Helicase ATP-binding domain; it reads EVGQRTAPRV…FARLSLLDPD (175 aa). Residue 176-183 coordinates ATP; the sequence is DEVGLGKT. Positions 283–286 match the DEAH box motif; sequence DEAH. Residues 489-660 form the Helicase C-terminal domain; that stretch reads RLEWLITFLK…KFLQNPTALE (172 aa).

It belongs to the SNF2/RAD54 helicase family. RapA subfamily. As to quaternary structure, interacts with the RNAP. Has a higher affinity for the core RNAP than for the holoenzyme. Its ATPase activity is stimulated by binding to RNAP.

Its function is as follows. Transcription regulator that activates transcription by stimulating RNA polymerase (RNAP) recycling in case of stress conditions such as supercoiled DNA or high salt concentrations. Probably acts by releasing the RNAP, when it is trapped or immobilized on tightly supercoiled DNA. Does not activate transcription on linear DNA. Probably not involved in DNA repair. This chain is RNA polymerase-associated protein RapA, found in Pasteurella multocida (strain Pm70).